Reading from the N-terminus, the 142-residue chain is Hemoglobin subunit alpha-4 (142 aa).

Positions 2–142 (TLTDSDKAAI…VATVLTSKYR (141 aa)) constitute a Globin domain. Position 59 (His-59) interacts with O2. Heme b is bound at residue His-88.

This sequence belongs to the globin family. In terms of assembly, heterotetramer of two alpha chains and two beta chains. Red blood cells.

Its function is as follows. This is a larval (tadpole) alpha-globin. The sequence is that of Hemoglobin subunit alpha-4 (hba4) from Xenopus laevis (African clawed frog).